Consider the following 299-residue polypeptide: Tryptophan prenyltransferase ComQ (299 aa).

D67 and D71 together coordinate Mg(2+).

This sequence belongs to the FPP/GGPP synthase family. Requires Mg(2+) as cofactor.

The protein localises to the cell membrane. The enzyme catalyses L-tryptophyl-[protein] + (2E,6E)-farnesyl diphosphate = (2S,3R)-3-farnesyl-2,3-dihydro-2,N(alpha)-cyclo-L-tryptophyl-[protein] + diphosphate. Functionally, part of a major quorum-sensing system that regulates the development of genetic competence. Involved in the maturation of the competence pheromone ComX. Acts by catalyzing the transfer of a farnesyl group on the ComX pheromone. Shows weak geranylation activity with geranyl diphosphate (GPP). The chain is Tryptophan prenyltransferase ComQ from Bacillus subtilis (strain 168).